Consider the following 478-residue polypeptide: Cytochrome P450 family 716 subfamily AD polypeptide 4 (478 aa).

The helical transmembrane segment at methionine 1–phenylalanine 21 threads the bilayer. Residue cysteine 425 coordinates heme.

The protein belongs to the cytochrome P450 family. Heme serves as cofactor. Mainly expressed in petioles and, to a lower extent, in roots.

It localises to the membrane. The catalysed reaction is (1S,3bR,4R,5aR,9aR,9bR,11aS)-1-[(4R)-5-[(2S)-3,3-dimethyloxiran-2-yl]-1,4-dihydroxybutan-2-yl]-3b,6,6,9a,11a-pentamethyl-7-oxo-1H,2H,3bH,4H,5H,5aH,6H,7H,9aH,9bH,10H,11H,11aH-cyclopenta[a]phenanthren-4-yl acetate + reduced [NADPH--hemoprotein reductase] + O2 = (1S,3bR,4R,5aR,9aR,9bR,11aS)-1-(1-hydroxy-4-oxobutan-2-yl)-3b,6,6,9a,11a-pentamethyl-7-oxo-1H,2H,3bH,4H,5H,5aH,6H,7H,9aH,9bH,10H,11H,11aH-cyclopenta[a]phenanthren-4-yl acetate + 2-methylpropanoate + oxidized [NADPH--hemoprotein reductase] + H2O + 2 H(+). Its pathway is secondary metabolite biosynthesis; terpenoid biosynthesis. Monooxygenase involved in the biosynthesis of limonoids triterpene natural products such as azadirachtin, an antifeedant widely used as bioinsecticide, and possessing many medicinal applications including anti-tumoral, anti-malarial, anti-rheumatic, antibacterial, anti-inflammatory, anti-pyretic and diuretic effects. Catalyzes the formation of (1S,3bR,4R,5aR,9aR,9bR,11aS)-1-(1-hydroxy-4-oxobutan-2-yl)-3b,6,6,9a,11a-pentamethyl-7-oxo-1H,2H,3bH,4H,5H,5aH,6H,7H,9aH,9bH,10H,11H,11aH-cyclopenta[a]phenanthren-4-yl acetate. The sequence is that of Cytochrome P450 family 716 subfamily AD polypeptide 4 from Melia azedarach (Chinaberry tree).